The chain runs to 1162 residues: Carbamoyl phosphate synthase large chain (1162 aa).

Residues 1-456 (MPKRTDIKSI…SLQKALRGLE (456 aa)) form a carboxyphosphate synthetic domain region. Residues R129, R222, G228, G229, E261, V263, E268, G294, V295, H296, Q338, and E352 each coordinate ATP. The region spanning 186–381 (ETEWQLGEVE…IAKVAAKLAV (196 aa)) is the ATP-grasp 1 domain. Mg(2+) is bound by residues Q338, E352, and N354. Residues Q338, E352, and N354 each coordinate Mn(2+). Residues 457–613 (TGLTGFDEIA…PFVGQPRSEA (157 aa)) form an oligomerization domain region. The segment at 614–1025 (EVSDRKKVVI…AFAKAQLGAG (412 aa)) is carbamoyl phosphate synthetic domain. The ATP-grasp 2 domain occupies 742–954 (QKLLIKLDLN…IAKVAARIMA (213 aa)). ATP-binding residues include R778, T838, L840, E845, G870, I871, H872, S873, Q913, and E925. Residues Q913, E925, and N927 each coordinate Mg(2+). Residues Q913, E925, and N927 each contribute to the Mn(2+) site. In terms of domain architecture, MGS-like spans 1026-1162 (VELPREGTVF…VRPLQDYFRS (137 aa)). Residues 1026-1162 (VELPREGTVF…VRPLQDYFRS (137 aa)) form an allosteric domain region.

The protein belongs to the CarB family. As to quaternary structure, composed of two chains; the small (or glutamine) chain promotes the hydrolysis of glutamine to ammonia, which is used by the large (or ammonia) chain to synthesize carbamoyl phosphate. Tetramer of heterodimers (alpha,beta)4. Mg(2+) is required as a cofactor. Requires Mn(2+) as cofactor.

It catalyses the reaction hydrogencarbonate + L-glutamine + 2 ATP + H2O = carbamoyl phosphate + L-glutamate + 2 ADP + phosphate + 2 H(+). The enzyme catalyses hydrogencarbonate + NH4(+) + 2 ATP = carbamoyl phosphate + 2 ADP + phosphate + 2 H(+). It functions in the pathway amino-acid biosynthesis; L-arginine biosynthesis; carbamoyl phosphate from bicarbonate: step 1/1. The protein operates within pyrimidine metabolism; UMP biosynthesis via de novo pathway; (S)-dihydroorotate from bicarbonate: step 1/3. In terms of biological role, large subunit of the glutamine-dependent carbamoyl phosphate synthetase (CPSase). CPSase catalyzes the formation of carbamoyl phosphate from the ammonia moiety of glutamine, carbonate, and phosphate donated by ATP, constituting the first step of 2 biosynthetic pathways, one leading to arginine and/or urea and the other to pyrimidine nucleotides. The large subunit (synthetase) binds the substrates ammonia (free or transferred from glutamine from the small subunit), hydrogencarbonate and ATP and carries out an ATP-coupled ligase reaction, activating hydrogencarbonate by forming carboxy phosphate which reacts with ammonia to form carbamoyl phosphate. The polypeptide is Carbamoyl phosphate synthase large chain (Brucella suis biovar 1 (strain 1330)).